A 165-amino-acid chain; its full sequence is Ubiquitin-like protein 4B (165 aa).

One can recognise a Ubiquitin-like domain in the interval 1 to 76; sequence MFLTVKLLLG…ISVVVRPLEK (76 aa). Positions 139 to 165 are disordered; sequence EPLAQPTGEREPEVLSPNKEEEKEAVQ. Basic and acidic residues predominate over residues 146-165; that stretch reads GEREPEVLSPNKEEEKEAVQ.

It localises to the cytoplasm. This Bos taurus (Bovine) protein is Ubiquitin-like protein 4B (UBL4B).